The primary structure comprises 231 residues: uncharacterized protein (231 aa).

The helical transmembrane segment at 86 to 106 (LIILFVIGLIITIIGLLMYEP) threads the bilayer.

The protein localises to the membrane. This is an uncharacterized protein from Methanocaldococcus jannaschii (strain ATCC 43067 / DSM 2661 / JAL-1 / JCM 10045 / NBRC 100440) (Methanococcus jannaschii).